Here is a 424-residue protein sequence, read N- to C-terminus: T-DNA border endonuclease VirD2 (424 aa).

2 disordered regions span residues 206–269 (AQKI…GSSI) and 321–424 (RPVT…RGGT). The segment covering 212 to 221 (EDTDFDETSP) has biased composition (acidic residues). A compositionally biased stretch (basic and acidic residues) spans 243 to 261 (EPDRATRHDKQPLEQHARF). The segment covering 330–339 (TVKRQQRSKR) has biased composition (basic residues). Basic and acidic residues-rich tracts occupy residues 394 to 408 (SPKRPRDRHDGELGG) and 415 to 424 (NRRDDGRGGT).

Functionally, tumor formation by A.tumefaciens involves the transfer and integration of a defined segment (T-DNA) of Ti plasmid DNA into the plant nuclear genome. The virD operon encodes a site-specific endonuclease that cleaves at a unique site within both 24 bp direct repeats flanking the T-DNA. The polypeptide is T-DNA border endonuclease VirD2 (virD2) (Rhizobium radiobacter (Agrobacterium tumefaciens)).